A 371-amino-acid chain; its full sequence is N-acetyllactosaminide alpha-2,3-sialyltransferase (371 aa).

CMP-N-acetyl-beta-neuraminate is bound at residue glycine 255. Aspartate 258 (proton acceptor) is an active-site residue. Residues 278-282, 299-300, and 322-323 contribute to the CMP-N-acetyl-beta-neuraminate site; these read APHPR, IE, and SG. Histidine 280 serves as the catalytic Proton donor.

It belongs to the glycosyltransferase 52 family. Homodimer.

The protein localises to the cell outer membrane. It catalyses the reaction a beta-D-galactosyl-(1-&gt;4)-N-acetyl-beta-D-glucosaminyl derivative + CMP-N-acetyl-beta-neuraminate = an N-acetyl-alpha-neuraminyl-(2-&gt;3)-beta-D-galactosyl-(1-&gt;4)-N-acetyl-beta-D-glucosaminyl derivative + CMP + H(+). Its pathway is bacterial outer membrane biogenesis; lipooligosaccharide biosynthesis. Its function is as follows. Catalyzes the transfer of sialic acid from the substrate CMP-N-acetylneuraminate to the terminal galactose residue of the lacto-N-neotetraose branch of surface lipooligosaccharide (LOS), forming an alpha-2,3-sialyl linkage. Thus, functions in the sialylation of LOS, which plays a role in the evasion of the host immune response by protecting N.meningitidis from complement-mediated serum killing and from phagocytic killing by neutrophils. This is N-acetyllactosaminide alpha-2,3-sialyltransferase from Neisseria meningitidis serogroup A / serotype 4A (strain DSM 15465 / Z2491).